Here is a 1018-residue protein sequence, read N- to C-terminus: Calcium-transporting ATPase sarcoplasmic/endoplasmic reticulum type (1018 aa).

Residues 1-48 (MEDGHSKTVDEVLSHFRVDPERGLSLDQVKEYQKKYGPNELPAEEGKT) are Cytoplasmic-facing. The helical transmembrane segment at 49–69 (LWQLVLEQFDDLLVKILLLAA) threads the bilayer. Residues 70–88 (IISFVLALFEEHEGVEAFV) lie on the Lumenal side of the membrane. Residues 89 to 109 (EPFVILLILIANAVVGVWQER) form a helical membrane-spanning segment. The Cytoplasmic portion of the chain corresponds to 110–252 (NAESAIEALK…EIKTPLQQKL (143 aa)). A helical transmembrane segment spans residues 253-272 (DEFGEQLSKVISLICVAVWA). Topologically, residues 273–294 (INIGHFNDPAHGGSWIKGAVYY) are lumenal. A helical membrane pass occupies residues 295–312 (FKIAVALAVAAIPEGLPA). Ca(2+) is bound by residues Val303, Ala304, Ile306, and Glu308. Residues 313-756 (VITTCLALGT…EEGRAIYNNM (444 aa)) are Cytoplasmic-facing. Asp350 serves as the catalytic 4-aspartylphosphate intermediate. Mg(2+) contacts are provided by Asp702 and Asp706. Residues 757–776 (KQFIRYLISSNIGEVVSIFL) form a helical membrane-spanning segment. Positions 767 and 770 each coordinate Ca(2+). Residues 777 to 786 (TAALGLPEAL) lie on the Lumenal side of the membrane. The chain crosses the membrane as a helical span at residues 787–807 (IPVQLLWVNLVTDGLPATALG). Residues Asn795, Thr798, and Asp799 each contribute to the Ca(2+) site. Over 808–827 (FNPPDLDIMTKPPRKADEGL) the chain is Cytoplasmic. Residues 828–850 (ISGWLFFRYMAIGGYVGCATVGG) traverse the membrane as a helical segment. Residues 851–896 (AAWWFMFSETGPQLSYWQLTHHLSCLGGGEEFKGIDCKIFNDPHPM) are Lumenal-facing. A helical transmembrane segment spans residues 897–916 (TMALSVLVTIEMLNAMNSLS). Glu907 is a Ca(2+) binding site. Residues 917–929 (ENQSLVQMPPWCN) lie on the Cytoplasmic side of the membrane. A helical transmembrane segment spans residues 930–948 (IWLIASMCLSFALHFVILY). Residues 949 to 963 (VDVLSTVFQVTPLDG) lie on the Lumenal side of the membrane. Residues 964-984 (NEWMTVMKFSLPVVLLDEILK) form a helical membrane-spanning segment. At 985–1018 (FVARRISDGESYIKNMHGLVLAWAVFFAYIIWGP) the chain is on the cytoplasmic side.

The protein belongs to the cation transport ATPase (P-type) (TC 3.A.3) family.

Its subcellular location is the endoplasmic reticulum membrane. The protein resides in the sarcoplasmic reticulum membrane. It carries out the reaction Ca(2+)(in) + ATP + H2O = Ca(2+)(out) + ADP + phosphate + H(+). In terms of biological role, this magnesium-dependent enzyme catalyzes the hydrolysis of ATP coupled with the transport of calcium. In Anopheles gambiae (African malaria mosquito), this protein is Calcium-transporting ATPase sarcoplasmic/endoplasmic reticulum type.